A 277-amino-acid chain; its full sequence is Type II restriction enzyme EcoRI (277 aa).

Catalysis depends on residues D91, E111, and K113. D91 and E111 together coordinate Mg(2+).

It belongs to the EcoRI type II restriction endonuclease family. As to quaternary structure, homodimer. Mg(2+) serves as cofactor.

The catalysed reaction is Endonucleolytic cleavage of DNA to give specific double-stranded fragments with terminal 5'-phosphates.. A P subtype restriction enzyme that recognizes the double-stranded sequence 5'-GAATTC-3' and cleaves after G-1. The protein is Type II restriction enzyme EcoRI (ecoRIR) of Escherichia coli.